We begin with the raw amino-acid sequence, 72 residues long: Beta-defensin 104 (72 aa).

Residues 1–22 (MQRLVLLLAISLLLYQDLPVRS) form the signal peptide. 3 disulfides stabilise this stretch: Cys30-Cys57, Cys37-Cys51, and Cys41-Cys58.

This sequence belongs to the beta-defensin family. In terms of tissue distribution, high expression in the testis. Gastric antrum exhibited relatively high levels. A lower expression is observed in uterus and neutrophils thyroid gland, lung, and kidney. No detectable expression in other tissues tested.

The protein resides in the secreted. In terms of biological role, has antimicrobial activity. Synergistic effects with lysozyme and DEFB103. This is Beta-defensin 104 (DEFB104A) from Homo sapiens (Human).